We begin with the raw amino-acid sequence, 225 residues long: Cytochrome c oxidase subunit 2 (225 aa).

The Mitochondrial intermembrane segment spans residues Met-1 to Asn-25. A helical membrane pass occupies residues Leu-26–Met-47. Over Asn-48–Glu-62 the chain is Mitochondrial matrix. Residues Ile-63–Lys-82 form a helical membrane-spanning segment. At Ile-83–Asn-225 the chain is on the mitochondrial intermembrane side. Residues His-159, Cys-194, Glu-196, Cys-198, His-202, and Met-205 each contribute to the Cu cation site. Glu-196 provides a ligand contact to Mg(2+).

Belongs to the cytochrome c oxidase subunit 2 family. As to quaternary structure, component of the cytochrome c oxidase (complex IV, CIV), a multisubunit enzyme composed of a catalytic core of 3 subunits and several supernumerary subunits. The complex exists as a monomer or a dimer and forms supercomplexes (SCs) in the inner mitochondrial membrane with ubiquinol-cytochrome c oxidoreductase (cytochrome b-c1 complex, complex III, CIII). It depends on Cu cation as a cofactor.

It is found in the mitochondrion inner membrane. The catalysed reaction is 4 Fe(II)-[cytochrome c] + O2 + 8 H(+)(in) = 4 Fe(III)-[cytochrome c] + 2 H2O + 4 H(+)(out). Its function is as follows. Component of the cytochrome c oxidase, the last enzyme in the mitochondrial electron transport chain which drives oxidative phosphorylation. The respiratory chain contains 3 multisubunit complexes succinate dehydrogenase (complex II, CII), ubiquinol-cytochrome c oxidoreductase (cytochrome b-c1 complex, complex III, CIII) and cytochrome c oxidase (complex IV, CIV), that cooperate to transfer electrons derived from NADH and succinate to molecular oxygen, creating an electrochemical gradient over the inner membrane that drives transmembrane transport and the ATP synthase. Cytochrome c oxidase is the component of the respiratory chain that catalyzes the reduction of oxygen to water. Electrons originating from reduced cytochrome c in the intermembrane space (IMS) are transferred via the dinuclear copper A center (CU(A)) of subunit 2 and heme A of subunit 1 to the active site in subunit 1, a binuclear center (BNC) formed by heme A3 and copper B (CU(B)). The BNC reduces molecular oxygen to 2 water molecules using 4 electrons from cytochrome c in the IMS and 4 protons from the mitochondrial matrix. This Apis koschevnikovi (Koschevnikov's honey bee) protein is Cytochrome c oxidase subunit 2 (COII).